A 423-amino-acid chain; its full sequence is Putative competence-damage inducible protein (423 aa).

Belongs to the CinA family.

This is Putative competence-damage inducible protein from Streptococcus pyogenes serotype M4 (strain MGAS10750).